Reading from the N-terminus, the 131-residue chain is Holo-[acyl-carrier-protein] synthase (131 aa).

D8 and E59 together coordinate Mg(2+).

It belongs to the P-Pant transferase superfamily. AcpS family. The cofactor is Mg(2+).

Its subcellular location is the cytoplasm. It catalyses the reaction apo-[ACP] + CoA = holo-[ACP] + adenosine 3',5'-bisphosphate + H(+). Functionally, transfers the 4'-phosphopantetheine moiety from coenzyme A to a Ser of acyl-carrier-protein. The sequence is that of Holo-[acyl-carrier-protein] synthase from Rickettsia massiliae (strain Mtu5).